Consider the following 355-residue polypeptide: MGCTVSQEDKAAADRSKMIDKNLREDGEKAAREVKLLLLGAGESGKSTIVKQMKIIHEDGYSEDECKQYRAVVYSNTVQSIMAIIKAMTILHLDYERPEREEDAKRLFKMAAEAEERGDLPEELANIIKDLWADSGIQHCLTRAREYQLNDSAAYYLKDLERISKPDYIPTQQDVLRTRVKTTGIVETHFTFKDLHFKMFDVGGQRSERKKWIHCFEGVTAIIFCVAMSAYDLVLAEDEEMNRMHESMKLFDSICNNKWFTETSIILFLNKKDLFEQKIAHSPLTICFPEYEGPNTYQEAQAYIQTKFEDLNKKKETKEIYTHFTCATDTKNVQFVFDAVTDVIIKNNLKDCGLF.

Gly-2 carries the N-myristoyl glycine lipid modification. Residue Cys-3 is the site of S-palmitoyl cysteine attachment. The 324-residue stretch at 32–355 folds into the G-alpha domain; it reads REVKLLLLGA…KNNLKDCGLF (324 aa). The interval 35 to 48 is G1 motif; it reads KLLLLGAGESGKST. GTP is bound by residues 40–47, 176–182, 201–205, 270–273, and Ala-327; these read GAGESGKS, LRTRVKT, DVGGQ, and NKKD. Mg(2+)-binding residues include Ser-47 and Thr-182. The segment at 174-182 is G2 motif; sequence DVLRTRVKT. Residues 197 to 206 are G3 motif; the sequence is FKMFDVGGQR. The segment at 266 to 273 is G4 motif; sequence ILFLNKKD. Residues 325-330 are G5 motif; that stretch reads TCATDT.

It belongs to the G-alpha family. G(i/o/t/z) subfamily. G proteins are composed of 3 units; alpha, beta and gamma. The alpha chain contains the guanine nucleotide binding site.

The protein localises to the cytoplasm. The protein resides in the cytoskeleton. It is found in the microtubule organizing center. Its subcellular location is the centrosome. It localises to the cell membrane. Functionally, guanine nucleotide-binding proteins (G proteins) are involved as modulators or transducers in various transmembrane signaling systems. The G(i) proteins are involved in hormonal regulation of adenylate cyclase: they inhibit the cyclase in response to beta-adrenergic stimuli. May play a role in cell division. In Oryzias latipes (Japanese rice fish), this protein is Guanine nucleotide-binding protein G(i) subunit alpha-2 (gnai2).